Consider the following 189-residue polypeptide: Protein GrpE (189 aa).

Over residues 1–14 the composition is skewed to basic and acidic residues; it reads MTDHTPLQPKHEIT. Residues 1-23 are disordered; the sequence is MTDHTPLQPKHEITDQADQDTSA.

It belongs to the GrpE family. In terms of assembly, homodimer.

Its subcellular location is the cytoplasm. Participates actively in the response to hyperosmotic and heat shock by preventing the aggregation of stress-denatured proteins, in association with DnaK and GrpE. It is the nucleotide exchange factor for DnaK and may function as a thermosensor. Unfolded proteins bind initially to DnaJ; upon interaction with the DnaJ-bound protein, DnaK hydrolyzes its bound ATP, resulting in the formation of a stable complex. GrpE releases ADP from DnaK; ATP binding to DnaK triggers the release of the substrate protein, thus completing the reaction cycle. Several rounds of ATP-dependent interactions between DnaJ, DnaK and GrpE are required for fully efficient folding. In Lawsonia intracellularis (strain PHE/MN1-00), this protein is Protein GrpE.